The primary structure comprises 361 residues: Queuine tRNA-ribosyltransferase (361 aa).

Aspartate 92 acts as the Proton acceptor in catalysis. Residues 92–96, aspartate 146, glutamine 189, and glycine 216 each bind substrate; that span reads DSGGF. The RNA binding stretch occupies residues 247–253; the sequence is GVGKPAD. The Nucleophile role is filled by aspartate 266. The segment at 271-275 is RNA binding; important for wobble base 34 recognition; it reads TRAGR. Zn(2+)-binding residues include cysteine 304, cysteine 306, cysteine 309, and histidine 335.

The protein belongs to the queuine tRNA-ribosyltransferase family. In terms of assembly, homodimer. Within each dimer, one monomer is responsible for RNA recognition and catalysis, while the other monomer binds to the replacement base PreQ1. Zn(2+) serves as cofactor.

The enzyme catalyses 7-aminomethyl-7-carbaguanine + guanosine(34) in tRNA = 7-aminomethyl-7-carbaguanosine(34) in tRNA + guanine. It participates in tRNA modification; tRNA-queuosine biosynthesis. Its function is as follows. Catalyzes the base-exchange of a guanine (G) residue with the queuine precursor 7-aminomethyl-7-deazaguanine (PreQ1) at position 34 (anticodon wobble position) in tRNAs with GU(N) anticodons (tRNA-Asp, -Asn, -His and -Tyr). Catalysis occurs through a double-displacement mechanism. The nucleophile active site attacks the C1' of nucleotide 34 to detach the guanine base from the RNA, forming a covalent enzyme-RNA intermediate. The proton acceptor active site deprotonates the incoming PreQ1, allowing a nucleophilic attack on the C1' of the ribose to form the product. After dissociation, two additional enzymatic reactions on the tRNA convert PreQ1 to queuine (Q), resulting in the hypermodified nucleoside queuosine (7-(((4,5-cis-dihydroxy-2-cyclopenten-1-yl)amino)methyl)-7-deazaguanosine). This chain is Queuine tRNA-ribosyltransferase, found in Rickettsia massiliae (strain Mtu5).